The chain runs to 1390 residues: DNA-directed RNA polymerase subunit beta' (1390 aa).

Positions 73, 75, 88, and 91 each coordinate Zn(2+). Mg(2+) contacts are provided by aspartate 464, aspartate 466, and aspartate 468. 4 residues coordinate Zn(2+): cysteine 810, cysteine 884, cysteine 891, and cysteine 894. The segment at 1365 to 1390 (EKKEQKIYGNGEEPAKEQKWIPQAGT) is disordered.

It belongs to the RNA polymerase beta' chain family. As to quaternary structure, the RNAP catalytic core consists of 2 alpha, 1 beta, 1 beta' and 1 omega subunit. When a sigma factor is associated with the core the holoenzyme is formed, which can initiate transcription. Requires Mg(2+) as cofactor. The cofactor is Zn(2+).

The enzyme catalyses RNA(n) + a ribonucleoside 5'-triphosphate = RNA(n+1) + diphosphate. In terms of biological role, DNA-dependent RNA polymerase catalyzes the transcription of DNA into RNA using the four ribonucleoside triphosphates as substrates. The sequence is that of DNA-directed RNA polymerase subunit beta' from Methylacidiphilum infernorum (isolate V4) (Methylokorus infernorum (strain V4)).